Reading from the N-terminus, the 125-residue chain is Large ribosomal subunit protein bL12 (125 aa).

It belongs to the bacterial ribosomal protein bL12 family. As to quaternary structure, homodimer. Part of the ribosomal stalk of the 50S ribosomal subunit. Forms a multimeric L10(L12)X complex, where L10 forms an elongated spine to which 2 to 4 L12 dimers bind in a sequential fashion. Binds GTP-bound translation factors.

Functionally, forms part of the ribosomal stalk which helps the ribosome interact with GTP-bound translation factors. Is thus essential for accurate translation. This is Large ribosomal subunit protein bL12 from Parabacteroides distasonis (strain ATCC 8503 / DSM 20701 / CIP 104284 / JCM 5825 / NCTC 11152).